Here is an 86-residue protein sequence, read N- to C-terminus: MDAFDVIKTPIVSEKTMKLIEEENRLVFYVERKATKADIRAAIKELFDAEVADINTSITPKGKKKAYITLKAEYNAGEVAASLGIY.

The protein belongs to the universal ribosomal protein uL23 family. In terms of assembly, part of the 50S ribosomal subunit. Contacts protein L29.

Functionally, binds to 23S rRNA. One of the proteins that surrounds the polypeptide exit tunnel on the outside of the ribosome. This chain is Large ribosomal subunit protein uL23, found in Methanococcus maripaludis (strain C5 / ATCC BAA-1333).